Consider the following 417-residue polypeptide: Probable tubulin polyglutamylase ttll-9 (417 aa).

The TTL domain maps to 23-372 (QRKKKILFKC…EKKLIGNENE (350 aa)). ATP is bound by residues 188–191 (QCYV), lysine 201, and aspartate 203.

Belongs to the tubulin--tyrosine ligase family. Expressed in head sensory neurons.

Functionally, polyglutamylase that forms polyglutamate side chains on tubulin. Acts when complexed with other proteins. Appears to be dispensable for polar spindle formation in dividing embryonic cells, for cilia-dependent osmotic avoidance and for male mating behavior. Probably by regulating microtubule stability via the glutamylation of tubulin, regulates PLM axon developmental growth. The polypeptide is Probable tubulin polyglutamylase ttll-9 (Caenorhabditis elegans).